The sequence spans 184 residues: dCTP deaminase (184 aa).

DCTP-binding positions include 107–112 (KSTYAR), 131–133 (TLE), Gln-152, Tyr-166, and Gln-176. Residue Glu-133 is the Proton donor/acceptor of the active site.

This sequence belongs to the dCTP deaminase family. In terms of assembly, homotrimer.

It catalyses the reaction dCTP + H2O + H(+) = dUTP + NH4(+). Its pathway is pyrimidine metabolism; dUMP biosynthesis; dUMP from dCTP (dUTP route): step 1/2. Functionally, catalyzes the deamination of dCTP to dUTP. This is dCTP deaminase from Novosphingobium aromaticivorans (strain ATCC 700278 / DSM 12444 / CCUG 56034 / CIP 105152 / NBRC 16084 / F199).